The sequence spans 485 residues: Glutamyl-tRNA(Gln) amidotransferase subunit A (485 aa).

Active-site charge relay system residues include Lys-75 and Ser-150. The active-site Acyl-ester intermediate is Ser-174.

Belongs to the amidase family. GatA subfamily. As to quaternary structure, heterotrimer of A, B and C subunits.

It catalyses the reaction L-glutamyl-tRNA(Gln) + L-glutamine + ATP + H2O = L-glutaminyl-tRNA(Gln) + L-glutamate + ADP + phosphate + H(+). Functionally, allows the formation of correctly charged Gln-tRNA(Gln) through the transamidation of misacylated Glu-tRNA(Gln) in organisms which lack glutaminyl-tRNA synthetase. The reaction takes place in the presence of glutamine and ATP through an activated gamma-phospho-Glu-tRNA(Gln). The polypeptide is Glutamyl-tRNA(Gln) amidotransferase subunit A (Picosynechococcus sp. (strain ATCC 27264 / PCC 7002 / PR-6) (Agmenellum quadruplicatum)).